Consider the following 761-residue polypeptide: BMP/retinoic acid-inducible neural-specific protein 1 (761 aa).

Positions 1–22 (MNWRLVEFLYLLFIWDHILVQP) are cleaved as a signal peptide. The region spanning 68–251 (RYKIYREFAR…FVQSALSYIM (184 aa)) is the MACPF domain. Residues asparagine 156, asparagine 433, asparagine 443, asparagine 553, asparagine 599, asparagine 631, and asparagine 677 are each glycosylated (N-linked (GlcNAc...) asparagine).

The protein belongs to the BRINP family.

The protein resides in the cytoplasm. Plays a role in neurogenesis and brain development. May suppress cell cycle progression in postmitotic neurons by inhibiting G1/S transition. The protein is BMP/retinoic acid-inducible neural-specific protein 1 (BRINP1) of Gallus gallus (Chicken).